Consider the following 445-residue polypeptide: Bifunctional protein GlmU (445 aa).

The tract at residues 1 to 218 (MRALVLAAGK…LLEITGVNTR (218 aa)) is pyrophosphorylase. UDP-N-acetyl-alpha-D-glucosamine is bound by residues 6–9 (LAAG), Lys20, Gln69, 74–75 (GT), 96–98 (YGD), Gly134, Glu147, Asn162, and Asn216. A Mg(2+)-binding site is contributed by Asp98. Asn216 serves as a coordination point for Mg(2+). The segment at 219–239 (KTLVWLEEQLRMRKIEELLEN) is linker. Residues 240-445 (GVTILDPATT…GWVLKKRKEE (206 aa)) form an N-acetyltransferase region. 2 residues coordinate UDP-N-acetyl-alpha-D-glucosamine: Arg321 and Lys339. The active-site Proton acceptor is His351. UDP-N-acetyl-alpha-D-glucosamine-binding residues include Tyr354 and Asn365. Acetyl-CoA contacts are provided by residues Ala368, 374–375 (NY), Ser393, Ala411, and Arg428.

It in the N-terminal section; belongs to the N-acetylglucosamine-1-phosphate uridyltransferase family. The protein in the C-terminal section; belongs to the transferase hexapeptide repeat family. In terms of assembly, homotrimer. Requires Mg(2+) as cofactor.

Its subcellular location is the cytoplasm. The enzyme catalyses alpha-D-glucosamine 1-phosphate + acetyl-CoA = N-acetyl-alpha-D-glucosamine 1-phosphate + CoA + H(+). The catalysed reaction is N-acetyl-alpha-D-glucosamine 1-phosphate + UTP + H(+) = UDP-N-acetyl-alpha-D-glucosamine + diphosphate. It participates in nucleotide-sugar biosynthesis; UDP-N-acetyl-alpha-D-glucosamine biosynthesis; N-acetyl-alpha-D-glucosamine 1-phosphate from alpha-D-glucosamine 6-phosphate (route II): step 2/2. Its pathway is nucleotide-sugar biosynthesis; UDP-N-acetyl-alpha-D-glucosamine biosynthesis; UDP-N-acetyl-alpha-D-glucosamine from N-acetyl-alpha-D-glucosamine 1-phosphate: step 1/1. The protein operates within bacterial outer membrane biogenesis; LPS lipid A biosynthesis. In terms of biological role, catalyzes the last two sequential reactions in the de novo biosynthetic pathway for UDP-N-acetylglucosamine (UDP-GlcNAc). The C-terminal domain catalyzes the transfer of acetyl group from acetyl coenzyme A to glucosamine-1-phosphate (GlcN-1-P) to produce N-acetylglucosamine-1-phosphate (GlcNAc-1-P), which is converted into UDP-GlcNAc by the transfer of uridine 5-monophosphate (from uridine 5-triphosphate), a reaction catalyzed by the N-terminal domain. In Thermotoga sp. (strain RQ2), this protein is Bifunctional protein GlmU.